The following is a 529-amino-acid chain: uncharacterized protein (529 aa).

Residues 157-410 (DFPHIICEIE…FKNRVRENID (254 aa)) form the Radical SAM core domain. Positions 171, 176, and 179 each coordinate [4Fe-4S] cluster.

It depends on [4Fe-4S] cluster as a cofactor.

This is an uncharacterized protein from Archaeoglobus fulgidus (strain ATCC 49558 / DSM 4304 / JCM 9628 / NBRC 100126 / VC-16).